A 271-amino-acid chain; its full sequence is 5-deoxy-glucuronate isomerase (271 aa).

This sequence belongs to the isomerase IolB family.

It catalyses the reaction 5-deoxy-D-glucuronate = 5-dehydro-2-deoxy-D-gluconate. Its pathway is polyol metabolism; myo-inositol degradation into acetyl-CoA; acetyl-CoA from myo-inositol: step 4/7. In terms of biological role, involved in the isomerization of 5-deoxy-glucuronate (5DG) to 5-dehydro-2-deoxy-D-gluconate (DKG or 2-deoxy-5-keto-D-gluconate). The protein is 5-deoxy-glucuronate isomerase of Lacticaseibacillus casei (Lactobacillus casei).